Reading from the N-terminus, the 471-residue chain is UDP-N-acetylmuramoylalanine--D-glutamate ligase (471 aa).

123 to 129 (GTNGKST) serves as a coordination point for ATP.

This sequence belongs to the MurCDEF family.

It localises to the cytoplasm. The catalysed reaction is UDP-N-acetyl-alpha-D-muramoyl-L-alanine + D-glutamate + ATP = UDP-N-acetyl-alpha-D-muramoyl-L-alanyl-D-glutamate + ADP + phosphate + H(+). It functions in the pathway cell wall biogenesis; peptidoglycan biosynthesis. Functionally, cell wall formation. Catalyzes the addition of glutamate to the nucleotide precursor UDP-N-acetylmuramoyl-L-alanine (UMA). In Caulobacter vibrioides (strain ATCC 19089 / CIP 103742 / CB 15) (Caulobacter crescentus), this protein is UDP-N-acetylmuramoylalanine--D-glutamate ligase.